A 224-amino-acid chain; its full sequence is Peroxiredoxin-6 (224 aa).

The Thioredoxin domain occupies 5-169 (LLLGDEAPNF…ILRVVDSLQL (165 aa)). The segment at 31–40 (DSWGILFSHP) is required and sufficient for targeting to lysosomes and lamellar bodies. At T44 the chain carries Phosphothreonine. C47 acts as the Cysteine sulfenic acid (-SOH) intermediate; for peroxidase activity in catalysis. An N6-acetyllysine modification is found at K63. Residue Y89 is modified to Phosphotyrosine. The active-site For phospholipase activity is D140. Position 177 is a phosphothreonine; by MAPK (T177). K209 bears the N6-acetyllysine; alternate mark. K209 carries the N6-succinyllysine; alternate modification.

Belongs to the peroxiredoxin family. Prx6 subfamily. In terms of assembly, homodimer. Interacts with GSTP1; mediates PRDX6 glutathionylation and regeneration. Interacts with APEX1. Interacts with STH. May interact with FAM168B. May interact with HTR2A. Post-translationally, phosphorylation at Thr-177 by MAP kinases increases the phospholipase activity of the enzyme. Phosphorylated form exhibits a greater lysophosphatidylcholine acyltransferase activity compared to the non-phosphorylated form. Irreversibly inactivated by overoxidation of Cys-47 to sulfinic acid (Cys-SO(2)H) and sulfonic acid (Cys-SO(3)H) forms upon oxidative stress.

Its subcellular location is the cytoplasm. The protein resides in the lysosome. It catalyses the reaction a hydroperoxide + 2 glutathione = an alcohol + glutathione disulfide + H2O. It carries out the reaction a 1,2-diacyl-sn-glycero-3-phosphocholine + H2O = a 1-acyl-sn-glycero-3-phosphocholine + a fatty acid + H(+). The enzyme catalyses a 1-acyl-sn-glycero-3-phosphocholine + an acyl-CoA = a 1,2-diacyl-sn-glycero-3-phosphocholine + CoA. The catalysed reaction is 1-hexadecanoyl-sn-glycero-3-phosphocholine + hexadecanoyl-CoA = 1,2-dihexadecanoyl-sn-glycero-3-phosphocholine + CoA. It catalyses the reaction 1,2-dihexadecanoyl-sn-glycero-3-phosphocholine + H2O = 1-hexadecanoyl-sn-glycero-3-phosphocholine + hexadecanoate + H(+). Its function is as follows. Thiol-specific peroxidase that catalyzes the reduction of hydrogen peroxide and organic hydroperoxides to water and alcohols, respectively. Can reduce H(2)O(2) and short chain organic, fatty acid, and phospholipid hydroperoxides. Also has phospholipase activity, can therefore either reduce the oxidized sn-2 fatty acyl group of phospholipids (peroxidase activity) or hydrolyze the sn-2 ester bond of phospholipids (phospholipase activity). These activities are dependent on binding to phospholipids at acidic pH and to oxidized phospholipds at cytosolic pH. Plays a role in cell protection against oxidative stress by detoxifying peroxides and in phospholipid homeostasis. Exhibits acyl-CoA-dependent lysophospholipid acyltransferase which mediates the conversion of lysophosphatidylcholine (1-acyl-sn-glycero-3-phosphocholine or LPC) into phosphatidylcholine (1,2-diacyl-sn-glycero-3-phosphocholine or PC). Shows a clear preference for LPC as the lysophospholipid and for palmitoyl CoA as the fatty acyl substrate. This is Peroxiredoxin-6 (Prdx6) from Rattus norvegicus (Rat).